The primary structure comprises 881 residues: MTGNELRERFLKFFASKGHTIVHSSSLVPANDPTLLFTNAGMVQFKDVYLGLDRRPFTRATTAQKCVRAGGKHNDLDTVGRTARHHTFFEMLGNFSFGDYFKREAITYAWEFLTRVLELPPERLWVTVYQEDDEAYQLWQEIAGIPAERIVRMGEKDNFWAMGDTGPCGPCSEIIYDRGPEHACSSTPCALGACDCDRWLEIWNLVFMQYERDSNGNLSPLPRPSIDTGMGLERVASVLQGVDSNFDTDLIAPLIKAVEKITGRTYDPGEAGFPFRVIADHARSCTFLIADGILPGNEGRSYVLRRILRRAARFGKALGIDEPFLYRLVDTVVAIMGGAYPEVAEQQEHIARVIEQEEIRFHETLNDGLKVLNGILERARQEGREVVSGLEAFTLYDTYGFPLDLTEEIAGEGGFKVDRDGFEKAMAAQRERARAAREDVKAYDFALAFAGALEDISGTAFTGYDQLEDKGTVLALFQEGARVTSLEANATGYVVLDRTPCYPEGGGQVGDRGELKWSGGQARVEDTRRLPDGKIVHQINVTAGTLVVGQEVEIAVDRERRQATARNHTVTHLLHRALKNILGEHVNQAGSLVTPERLRFDFTHFAPLTGEELRAVEAEVNQKILANLPVTTLETSYQEAKAMGATALFGEKYGERVRVVKIDAYSMELCGGTHLGSTSEAGSFRLVSESGIGAGVRRVEAVTGAAALEMALQDRQELATIAGLLKVPPDQAIQRVRHLLEQNKENERELAQLRNELASYTIDKLLDRVQEVAGVPVLPARVQITDPEALREMAERLRSRLGSGVVILGSQHNGRVNFVAMVSKDLVQRGIHAGNLLREVARIASGGGGGRADMAQAGGKDPGKLDQALAYSLKVVAAQVR.

Zn(2+) contacts are provided by His568, His572, Cys670, and His674.

The protein belongs to the class-II aminoacyl-tRNA synthetase family. It depends on Zn(2+) as a cofactor.

It is found in the cytoplasm. The enzyme catalyses tRNA(Ala) + L-alanine + ATP = L-alanyl-tRNA(Ala) + AMP + diphosphate. Functionally, catalyzes the attachment of alanine to tRNA(Ala) in a two-step reaction: alanine is first activated by ATP to form Ala-AMP and then transferred to the acceptor end of tRNA(Ala). Also edits incorrectly charged Ser-tRNA(Ala) and Gly-tRNA(Ala) via its editing domain. The protein is Alanine--tRNA ligase of Moorella thermoacetica (strain ATCC 39073 / JCM 9320).